The sequence spans 341 residues: Malate dehydrogenase, mitochondrial (341 aa).

Residues 35–41 (GAGGGIG) and aspartate 61 contribute to the NAD(+) site. Substrate contacts are provided by arginine 109 and arginine 115. An NAD(+)-binding site is contributed by asparagine 122. The substrate site is built by asparagine 147 and arginine 181. The Proton acceptor role is filled by histidine 205. Methionine 254 is an NAD(+) binding site.

Belongs to the LDH/MDH superfamily. MDH type 1 family. Homodimer.

Its subcellular location is the mitochondrion matrix. The enzyme catalyses (S)-malate + NAD(+) = oxaloacetate + NADH + H(+). This is Malate dehydrogenase, mitochondrial (MDH1) from Schizosaccharomyces pombe (strain 972 / ATCC 24843) (Fission yeast).